We begin with the raw amino-acid sequence, 341 residues long: NADH-ubiquinone oxidoreductase chain 2 (341 aa).

Helical transmembrane passes span 8–28, 61–81, 95–115, 121–141, 146–166, 174–194, 195–215, 238–258, 273–293, and 321–341; these read ILFTTIMIIGTLITVTSNSWL, FLTQALASTVLLFSSILLMLA, MIIMSALLLKSGAAPFHFWFP, LTWMNALMLMTWQKIAPLMLI, IKNLLLISVILSVIIGAIGGL, LMAFSSINHLGWMLSSLMISE, SIWLIYFIFYSFLSFVLTFMF, FSLFMNFLSLGGLPPFLGFLP, FLLTLMMMSTLITLFFYLRIC, and LIMTFFSIFGLFLISLFFFML.

Belongs to the complex I subunit 2 family.

The protein resides in the mitochondrion inner membrane. It catalyses the reaction a ubiquinone + NADH + 5 H(+)(in) = a ubiquinol + NAD(+) + 4 H(+)(out). Its function is as follows. Core subunit of the mitochondrial membrane respiratory chain NADH dehydrogenase (Complex I) that is believed to belong to the minimal assembly required for catalysis. Complex I functions in the transfer of electrons from NADH to the respiratory chain. The immediate electron acceptor for the enzyme is believed to be ubiquinone. The sequence is that of NADH-ubiquinone oxidoreductase chain 2 (mt:ND2) from Drosophila yakuba (Fruit fly).